Here is a 347-residue protein sequence, read N- to C-terminus: Spermidine/putrescine import ATP-binding protein PotA (347 aa).

Residues 6 to 236 (IEIKNVYKEF…PKNAFVAKFI (231 aa)) form the ABC transporter domain. 38–45 (GPSGCGKT) provides a ligand contact to ATP.

It belongs to the ABC transporter superfamily. Spermidine/putrescine importer (TC 3.A.1.11.1) family. As to quaternary structure, the complex is composed of two ATP-binding proteins (PotA), two transmembrane proteins (PotB and PotC) and a solute-binding protein (PotD).

It localises to the cell membrane. It carries out the reaction ATP + H2O + polyamine-[polyamine-binding protein]Side 1 = ADP + phosphate + polyamineSide 2 + [polyamine-binding protein]Side 1.. Its function is as follows. Part of the ABC transporter complex PotABCD involved in spermidine/putrescine import. Responsible for energy coupling to the transport system. This is Spermidine/putrescine import ATP-binding protein PotA from Clostridium novyi (strain NT).